Consider the following 411-residue polypeptide: Histone-lysine N-methyltransferase SUV39H1-A (411 aa).

In terms of domain architecture, Chromo spans 43-101 (YEVEYLCNYKKHKGREFFLVKWKGYEESENTWEPLKNLKCPILLHQFRKDMKAALLQAN). Residues 178 to 239 (VGCECEDCVS…DCANRVVQRG (62 aa)) form the Pre-SET domain. Positions 180, 182, 185, 193, 194, 221, 225, 227, and 231 each coordinate Zn(2+). The SET domain occupies 242–365 (YDLCIFKTDN…AGEELTFDYK (124 aa)). Residues 253–255 (RGW), tyrosine 296, and 322–323 (NH) each bind S-adenosyl-L-methionine. The Zn(2+) site is built by cysteine 325, cysteine 399, cysteine 401, and cysteine 406. Positions 395–411 (VHMECKCGVRNCRKYLF) constitute a Post-SET domain.

This sequence belongs to the class V-like SAM-binding methyltransferase superfamily. Histone-lysine methyltransferase family. Suvar3-9 subfamily. In terms of tissue distribution, expressed ubuitiously.

The protein resides in the nucleus. It is found in the chromosome. The protein localises to the centromere. It catalyses the reaction N(6)-methyl-L-lysyl(9)-[histone H3] + S-adenosyl-L-methionine = N(6),N(6)-dimethyl-L-lysyl(9)-[histone H3] + S-adenosyl-L-homocysteine + H(+). The catalysed reaction is N(6),N(6)-dimethyl-L-lysyl(9)-[histone H3] + S-adenosyl-L-methionine = N(6),N(6),N(6)-trimethyl-L-lysyl(9)-[histone H3] + S-adenosyl-L-homocysteine + H(+). Histone methyltransferase that specifically trimethylates 'Lys-9' of histone H3 using monomethylated H3 'Lys-9' as substrate. H3 'Lys-9' trimethylation represents a specific tag for epigenetic transcriptional repression by recruiting HP1 (CBX1, CBX3 and/or CBX5) proteins to methylated histones. Mainly functions in heterochromatin regions, thereby playing a central role in the establishment of constitutive heterochromatin at pericentric and telomere regions. H3 'Lys-9' trimethylation is also required to direct DNA methylation at pericentric repeats. SUV39H1 is targeted to histone H3 via its interaction with RB1 and is involved in many processes, such as regulation of organ-specific terminal differentiation during development. In Danio rerio (Zebrafish), this protein is Histone-lysine N-methyltransferase SUV39H1-A (suv39h1a).